The primary structure comprises 231 residues: Small proline-rich protein 3 (231 aa).

The segment at methionine 1–proline 104 is disordered. Serine 2 is modified (N-acetylserine). Tandem repeats lie at residues glutamate 55–proline 62, glutamate 63–proline 70, aspartate 71–proline 78, aspartate 79–proline 86, glutamate 87–proline 94, glycine 95–proline 102, glutamine 103–proline 110, aspartate 111–proline 118, glutamate 119–proline 126, glycine 127–proline 134, glutamine 135–proline 142, glutamate 143–proline 150, glycine 151–proline 158, glutamine 159–proline 166, glutamate 167–proline 174, glycine 175–proline 182, glutamine 183–proline 190, glutamate 191–proline 198, glycine 199–proline 206, glutamine 207–glutamine 214, and glutamate 215–threonine 222. The segment at glutamate 55 to threonine 222 is 21 X 8 AA approximate tandem repeats. Positions serine 80–proline 94 are enriched in polar residues. The disordered stretch occupies residues lysine 188–lysine 231. A compositionally biased stretch (polar residues) spans glutamine 214–lysine 231.

This sequence belongs to the cornifin (SPRR) family. As to expression, suprabasal layers of the squamous epithelia of esophagus, tongue and oral mucosa.

The protein localises to the cytoplasm. Can serve as a substrate in transglutaminase-catalyzed cross linking reactions and can function as a cross-linked envelope precursor. The sequence is that of Small proline-rich protein 3 (SPRR3) from Oryctolagus cuniculus (Rabbit).